The sequence spans 176 residues: Ribosome maturation factor RimM (176 aa).

A PRC barrel domain is found at 94–176; that stretch reads KDEFFYFEIL…RFGFEILQNS (83 aa).

It belongs to the RimM family. As to quaternary structure, binds ribosomal protein uS19.

The protein resides in the cytoplasm. Its function is as follows. An accessory protein needed during the final step in the assembly of 30S ribosomal subunit, possibly for assembly of the head region. Essential for efficient processing of 16S rRNA. May be needed both before and after RbfA during the maturation of 16S rRNA. It has affinity for free ribosomal 30S subunits but not for 70S ribosomes. The chain is Ribosome maturation factor RimM from Campylobacter hominis (strain ATCC BAA-381 / DSM 21671 / CCUG 45161 / LMG 19568 / NCTC 13146 / CH001A).